A 155-amino-acid polypeptide reads, in one-letter code: Aspartate carbamoyltransferase regulatory chain (155 aa).

4 residues coordinate Zn(2+): Cys-113, Cys-118, Cys-139, and Cys-142.

Belongs to the PyrI family. Contains catalytic and regulatory chains. The cofactor is Zn(2+).

In terms of biological role, involved in allosteric regulation of aspartate carbamoyltransferase. The sequence is that of Aspartate carbamoyltransferase regulatory chain from Methanoculleus marisnigri (strain ATCC 35101 / DSM 1498 / JR1).